Reading from the N-terminus, the 24-residue chain is Retinol-binding protein 3 (24 aa).

The protein localises to the secreted. It localises to the extracellular space. The protein resides in the extracellular matrix. Its subcellular location is the interphotoreceptor matrix. In terms of biological role, IRBP shuttles 11-cis and all trans retinoids between the retinol isomerase in the pigment epithelium and the visual pigments in the photoreceptor cells of the retina. The polypeptide is Retinol-binding protein 3 (RBP3) (Ovis aries (Sheep)).